The following is a 166-amino-acid chain: 3-isopropylmalate dehydratase small subunit 2 (166 aa).

Belongs to the LeuD family. LeuD type 2 subfamily. Heterodimer of LeuC and LeuD.

The enzyme catalyses (2R,3S)-3-isopropylmalate = (2S)-2-isopropylmalate. Its pathway is amino-acid biosynthesis; L-leucine biosynthesis; L-leucine from 3-methyl-2-oxobutanoate: step 2/4. Functionally, catalyzes the isomerization between 2-isopropylmalate and 3-isopropylmalate, via the formation of 2-isopropylmaleate. The sequence is that of 3-isopropylmalate dehydratase small subunit 2 (leuD2) from Thermotoga maritima (strain ATCC 43589 / DSM 3109 / JCM 10099 / NBRC 100826 / MSB8).